The following is a 431-amino-acid chain: Histidine--tRNA ligase (431 aa).

This sequence belongs to the class-II aminoacyl-tRNA synthetase family. Homodimer.

The protein resides in the cytoplasm. The catalysed reaction is tRNA(His) + L-histidine + ATP = L-histidyl-tRNA(His) + AMP + diphosphate + H(+). The chain is Histidine--tRNA ligase from Levilactobacillus brevis (strain ATCC 367 / BCRC 12310 / CIP 105137 / JCM 1170 / LMG 11437 / NCIMB 947 / NCTC 947) (Lactobacillus brevis).